A 558-amino-acid polypeptide reads, in one-letter code: Formate--tetrahydrofolate ligase (558 aa).

T66–T73 is a binding site for ATP.

This sequence belongs to the formate--tetrahydrofolate ligase family.

The enzyme catalyses (6S)-5,6,7,8-tetrahydrofolate + formate + ATP = (6R)-10-formyltetrahydrofolate + ADP + phosphate. Its pathway is one-carbon metabolism; tetrahydrofolate interconversion. This Neisseria meningitidis serogroup B (strain ATCC BAA-335 / MC58) protein is Formate--tetrahydrofolate ligase.